The sequence spans 144 residues: uncharacterized protein (144 aa).

4 consecutive transmembrane segments (helical) span residues 27 to 47 (VVCA…IPDI), 49 to 69 (LLPI…LLAL), 83 to 103 (IVLL…DATV), and 106 to 126 (ALDM…ILNV).

It localises to the membrane. This is an uncharacterized protein from Saccharomyces cerevisiae (strain ATCC 204508 / S288c) (Baker's yeast).